Consider the following 963-residue polypeptide: Kinesin-1 heavy chain (963 aa).

Position 2 is an N-acetylalanine (alanine 2). One can recognise a Kinesin motor domain in the interval 8–325 (NIKVMCRFRP…LLFGQRAKTI (318 aa)). 85-92 (GQTSSGKT) provides a ligand contact to ATP. Lysine 213 participates in a covalent cross-link: Glycyl lysine isopeptide (Lys-Gly) (interchain with G-Cter in SUMO2). Positions 330 to 913 (CVNVELTAEQ…EAVRSKNMAR (584 aa)) form a coiled coil. The tract at residues 908-963 (SKNMARRGHSAQIAKPIRPGQHPAASPTHPGAVRGGGSFVQNNQPVGLRGGGGKQA) is disordered. A globular region spans residues 915–963 (GHSAQIAKPIRPGQHPAASPTHPGAVRGGGSFVQNNQPVGLRGGGGKQA). Serine 933 and serine 945 each carry phosphoserine. Arginine 956 is subject to Omega-N-methylarginine.

It belongs to the TRAFAC class myosin-kinesin ATPase superfamily. Kinesin family. Kinesin subfamily. In terms of assembly, oligomer composed of two heavy chains and two light chains. Interacts with GRIP1 and PPP1R42. Interacts with SYBU. Interacts with JAKMIP1. Interacts with PLEKHM2. Interacts with ECPAS. Interacts with ZFYVE27. Found in a complex with OGT, RHOT1, RHOT2 and TRAK1. Interacts with APP (via cytoplasmic domain). In terms of tissue distribution, expressed in the brain (at protein level). Expressed in the brain, liver, kidney, spleen, heart, lung and sciatic nerve.

The protein resides in the cytoplasm. The protein localises to the cytoskeleton. Its subcellular location is the cytolytic granule membrane. It localises to the lysosome membrane. Microtubule-dependent motor required for normal distribution of mitochondria and lysosomes. Can induce formation of neurite-like membrane protrusions in non-neuronal cells in a ZFYVE27-dependent manner. Regulates centrosome and nuclear positioning during mitotic entry. During the G2 phase of the cell cycle in a BICD2-dependent manner, antagonizes dynein function and drives the separation of nuclei and centrosomes. Required for anterograde axonal transportation of MAPK8IP3/JIP3 which is essential for MAPK8IP3/JIP3 function in axon elongation. Through binding with PLEKHM2 and ARL8B, directs lysosome movement toward microtubule plus ends. Involved in NK cell-mediated cytotoxicity. Drives the polarization of cytolytic granules and microtubule-organizing centers (MTOCs) toward the immune synapse between effector NK lymphocytes and target cells. In Rattus norvegicus (Rat), this protein is Kinesin-1 heavy chain.